We begin with the raw amino-acid sequence, 570 residues long: Urease subunit alpha (570 aa).

Positions 131–570 constitute a Urease domain; sequence GGMDSHIHFI…LPMAQRYFLF (440 aa). Residues histidine 136, histidine 138, and lysine 219 each contribute to the Ni(2+) site. Lysine 219 bears the N6-carboxylysine mark. Residue histidine 221 coordinates substrate. Ni(2+) is bound by residues histidine 248 and histidine 274. The active-site Proton donor is the histidine 322. Aspartate 362 contributes to the Ni(2+) binding site.

It belongs to the metallo-dependent hydrolases superfamily. Urease alpha subunit family. Heterotrimer of UreA (gamma), UreB (beta) and UreC (alpha) subunits. Three heterotrimers associate to form the active enzyme. Ni cation serves as cofactor. Post-translationally, carboxylation allows a single lysine to coordinate two nickel ions.

It is found in the cytoplasm. It catalyses the reaction urea + 2 H2O + H(+) = hydrogencarbonate + 2 NH4(+). The protein operates within nitrogen metabolism; urea degradation; CO(2) and NH(3) from urea (urease route): step 1/1. The sequence is that of Urease subunit alpha from Allorhizobium ampelinum (strain ATCC BAA-846 / DSM 112012 / S4) (Agrobacterium vitis (strain S4)).